The chain runs to 481 residues: MACRKFCGVYRRPDKRQEASVPPETNTAPAFPASTFYTPAEDAYLAPGPPETIHPSRPPSPGEAARLCQLQEILAQMHSDEDYPIVDAAGAEEEDEADDDAPDDVAYPEDYAEGRFLSMVSAAPLPGASGHPPVPGRAAPPDVRTCDTGKVGATGFTPEELDTMDREALRAISRGCKPPSTLAKLVTGLGFAIHGALIPGSEGCVFDSSHPNYPHRVIVKAGWYASTSHEARLLRRLNHPAILPLLDLHVVSGVTCLVLPKYHCDLYTYLSKRPSPLGHLQITAVSRQLLSAIDYVHCKGIIHRDIKTENIFINTPENICLGDFGAACFVRGCRSSPFHYGIAGTIDTNAPEVLAGDPYTQVIDIWSAGLVIFETAVHTASLFSAPRDPERRPCDNQIARIIRQAQVHVDEFPTHAESRLTAHYRSRAAGNNRPAWTRPAWTRYYKIHTDVEYLICKALTFDAALRPSAAELLRLPLFHPK.

Positions 12–63 are disordered; sequence RPDKRQEASVPPETNTAPAFPASTFYTPAEDAYLAPGPPETIHPSRPPSPGE. The span at 47–61 shows a compositional bias: pro residues; the sequence is PGPPETIHPSRPPSP. One can recognise a Protein kinase domain in the interval 191–478; sequence FAIHGALIPG…AAELLRLPLF (288 aa). Residues 197–205 and K220 each bind ATP; that span reads LIPGSEGCV. The active-site Proton acceptor is the D305.

The protein belongs to the protein kinase superfamily. Ser/Thr protein kinase family. Interacts with host LAT; this interaction prevents LAT activation of TRAF6. Phosphorylated by UL13; this phosphorylation regulates subsequent phosphorylation of UL31 and UL34 by US3. Autophosphorylated.

It localises to the host cytoplasm. The protein localises to the host nucleus. The catalysed reaction is L-seryl-[protein] + ATP = O-phospho-L-seryl-[protein] + ADP + H(+). The enzyme catalyses L-threonyl-[protein] + ATP = O-phospho-L-threonyl-[protein] + ADP + H(+). Functionally, multifunctional serine/threonine kinase that plays a role in several processes including egress of virus particles from the nucleus, modulation of the actin cytoskeleton and inhibition of host immune response. Phosphorylates UL31 and UL34, two critical regulators of capsid budding from nucleus to endoplasmic reticulum, thereby facilitating virion egress. Modulates and redistributes host components of the nuclear envelope, including LMNA, emerin/EMD and the nuclear matrix protein MATR3. In turn, facilitates nuclear pore impairment and capsid release through impaired nuclear envelope. Phosphorylates envelope glycoprotein B (gB), probably to direct it to the cell surface. Promotes virus intracellular spread by restructuring host cell cytoskeleton. Blocks host apoptosis to extend cell survival and allow efficient viral replication. Promotes viral gene expression by phosphorylating host HDAC2 to reduce viral genome silencing. Strongly inhibits TCR-activated signal transduction in T-cells by reducing the ubiquitination of LAT and TRAF6, leading to a suboptimal activation of LAT. Subverts host antiviral innate immunity by inhibiting type I interferon production through hyperphosphorylation of beta-catenin/CTNNB1. In addition, phosphorylates the RNA sensor RIGI and the transcription factor IRF3 to prevent the RLR-mediated antiviral signaling pathway. Hyperphosphorylates host RELA and thereby dampens NF-kappa-B signaling. Acts as an immunoevasin partly responsible for inhibition of MR1 expression and antigen presentation in response to bacterial infection. In Human herpesvirus 2 (strain HG52) (HHV-2), this protein is Serine/threonine-protein kinase US3 (US3).